A 468-amino-acid polypeptide reads, in one-letter code: Ribosomal protein uS12 methylthiotransferase RimO (468 aa).

In terms of domain architecture, MTTase N-terminal spans 18–129; it reads PTVAFAHLGC…IVEVLERVEA (112 aa). The [4Fe-4S] cluster site is built by Cys27, Cys63, Cys92, Cys167, Cys171, and Cys174. The Radical SAM core domain maps to 153 to 382; that stretch reads TTGEAVAYLK…MTLQQPISAA (230 aa). The TRAM domain occupies 385–456; the sequence is ARWVGRTVDA…IYDLRAEIVG (72 aa).

The protein belongs to the methylthiotransferase family. RimO subfamily. [4Fe-4S] cluster is required as a cofactor.

It is found in the cytoplasm. The catalysed reaction is L-aspartate(89)-[ribosomal protein uS12]-hydrogen + (sulfur carrier)-SH + AH2 + 2 S-adenosyl-L-methionine = 3-methylsulfanyl-L-aspartate(89)-[ribosomal protein uS12]-hydrogen + (sulfur carrier)-H + 5'-deoxyadenosine + L-methionine + A + S-adenosyl-L-homocysteine + 2 H(+). Catalyzes the methylthiolation of an aspartic acid residue of ribosomal protein uS12. The chain is Ribosomal protein uS12 methylthiotransferase RimO from Synechococcus sp. (strain WH7803).